A 296-amino-acid polypeptide reads, in one-letter code: Formamidopyrimidine-DNA glycosylase (296 aa).

The active-site Schiff-base intermediate with DNA is the Pro-2. Glu-3 functions as the Proton donor in the catalytic mechanism. Lys-61 serves as the catalytic Proton donor; for beta-elimination activity. 3 residues coordinate DNA: His-104, Arg-123, and Lys-169. The FPG-type zinc-finger motif lies at Asp-255–Pro-289. Arg-279 (proton donor; for delta-elimination activity) is an active-site residue.

Belongs to the FPG family. In terms of assembly, monomer. Zn(2+) is required as a cofactor.

It catalyses the reaction Hydrolysis of DNA containing ring-opened 7-methylguanine residues, releasing 2,6-diamino-4-hydroxy-5-(N-methyl)formamidopyrimidine.. The catalysed reaction is 2'-deoxyribonucleotide-(2'-deoxyribose 5'-phosphate)-2'-deoxyribonucleotide-DNA = a 3'-end 2'-deoxyribonucleotide-(2,3-dehydro-2,3-deoxyribose 5'-phosphate)-DNA + a 5'-end 5'-phospho-2'-deoxyribonucleoside-DNA + H(+). Involved in base excision repair of DNA damaged by oxidation or by mutagenic agents. Acts as a DNA glycosylase that recognizes and removes damaged bases. Has a preference for oxidized purines, such as 7,8-dihydro-8-oxoguanine (8-oxoG). Has AP (apurinic/apyrimidinic) lyase activity and introduces nicks in the DNA strand. Cleaves the DNA backbone by beta-delta elimination to generate a single-strand break at the site of the removed base with both 3'- and 5'-phosphates. This Mycobacterium sp. (strain KMS) protein is Formamidopyrimidine-DNA glycosylase.